We begin with the raw amino-acid sequence, 553 residues long: Solute carrier family 22 member 2 (553 aa).

The Cytoplasmic portion of the chain corresponds to 1 to 21 (MPTVDDILEHIGEFHLFQKQT). Residues 22–42 (FFLLALLSGAFTPIYVGIVFL) traverse the membrane as a helical segment. Residues 43-150 (GFTPNHHCRS…LVCAHSWMLD (108 aa)) lie on the Extracellular side of the membrane. N-linked (GlcNAc...) asparagine glycosylation occurs at Asn-71. The helical transmembrane segment at 151–171 (LFQSLVNVGFFIGAVGIGYLA) threads the bilayer. The Cytoplasmic segment spans residues 172–177 (DRFGRK). The chain crosses the membrane as a helical span at residues 178–198 (FCLLVTILINAISGVLMAISP). Over 199–210 (NYAWMLVFRFLQ) the chain is Extracellular. The helical transmembrane segment at 211–231 (GLVSKAGWLIGYILITEFVGL) threads the bilayer. Residues 232-238 (GYRRTVG) lie on the Cytoplasmic side of the membrane. Residues 239–259 (ICYQIAFTVGLLILAGVAYAL) traverse the membrane as a helical segment. Over 260-263 (PNWR) the chain is Extracellular. The helical transmembrane segment at 264 to 284 (WLQFAVTLPNFCFLLYFWCIP) threads the bilayer. Positions 284–288 (PESPR) match the Proline-rich sequence motif. Residues 285 to 348 (ESPRWLISQN…VRTPQIRKHT (64 aa)) are Cytoplasmic-facing. Residues 349-369 (LILMYNWFTSSVLYQGLIMHM) form a helical membrane-spanning segment. Over 370-375 (GLAGDN) the chain is Extracellular. Residues 376–396 (IYLDFFYSALVEFPAAFIIIL) traverse the membrane as a helical segment. At 397-404 (TIDRIGRR) the chain is on the cytoplasmic side. The chain crosses the membrane as a helical span at residues 405–425 (YPWAVSNMVAGAACLASVFIP). The Extracellular segment spans residues 426 to 432 (DDLQWLK). Residues 433–453 (ITVACLGRMGITIAYEMVCLV) traverse the membrane as a helical segment. Over 454 to 464 (NAELYPTYIRN) the chain is Cytoplasmic. Residues 465–485 (LAVLVCSSMCDIGGIVTPFLV) traverse the membrane as a helical segment. Residues 486 to 494 (YRLTDIWLE) are Extracellular-facing. The chain crosses the membrane as a helical span at residues 495 to 515 (FPLVVFAVVGLVAGGLVLLLP). Over 516–553 (ETKGKALPETIEDAEKMQRPRKKKEKRIYLQVKKAELS) the chain is Cytoplasmic.

This sequence belongs to the major facilitator (TC 2.A.1) superfamily. Organic cation transporter (TC 2.A.1.19) family. In terms of processing, tyrosine phosphorylated by tyrosine-protein kinase YES1. In terms of tissue distribution, expressed in kidney and ureter. To a lower extent, also expressed in brain and embryo.

The protein localises to the basolateral cell membrane. The protein resides in the basal cell membrane. It is found in the apical cell membrane. It carries out the reaction (R)-noradrenaline(out) = (R)-noradrenaline(in). The enzyme catalyses (R)-adrenaline(out) = (R)-adrenaline(in). It catalyses the reaction serotonin(out) = serotonin(in). The catalysed reaction is dopamine(out) = dopamine(in). It carries out the reaction histamine(out) = histamine(in). The enzyme catalyses thiamine(in) = thiamine(out). It catalyses the reaction creatinine(in) = creatinine(out). The catalysed reaction is 1-methylnicotinamide(out) = 1-methylnicotinamide(in). It carries out the reaction guanidine(out) = guanidine(in). The enzyme catalyses choline(out) = choline(in). It catalyses the reaction agmatine(out) = agmatine(in). The catalysed reaction is putrescine(out) = putrescine(in). It carries out the reaction spermidine(in) = spermidine(out). The enzyme catalyses tyramine(in) = tyramine(out). It catalyses the reaction L-histidyl-L-proline diketopiperazine(in) = L-histidyl-L-proline diketopiperazine(out). The catalysed reaction is (R)-salsolinol(in) = (R)-salsolinol(out). It carries out the reaction N-methyl-(R)-salsolinol(in) = N-methyl-(R)-salsolinol(out). The enzyme catalyses acetylcholine(in) = acetylcholine(out). It catalyses the reaction prostaglandin F2alpha(out) = prostaglandin F2alpha(in). The catalysed reaction is prostaglandin E2(out) = prostaglandin E2(in). With respect to regulation, tyrosine phosphorylation of the transporter leads to activation of the transport activity. TEA uptake is activated by tyrosine phosphorylation. Inhibited by cGMP, most likely through a cGMP-binding protein that interacts with OCT2. Its function is as follows. Electrogenic voltage-dependent transporter that mediates the transport of a variety of organic cations such as endogenous bioactive amines, cationic drugs and xenobiotics. Functions as a Na(+)-independent, bidirectional uniporter. Cation cellular uptake or release is driven by the electrochemical potential, i.e. membrane potential and concentration gradient. However, may also engage electroneutral cation exchange when saturating concentrations of cation substrates are reached. Predominantly expressed at the basolateral membrane of hepatocytes and proximal tubules and involved in the uptake and disposition of cationic compounds by hepatic and renal clearance from the blood flow. Implicated in monoamine neurotransmitters uptake such as histamine, dopamine, adrenaline/epinephrine, noradrenaline/norepinephrine, serotonin and tyramine, thereby supporting a physiological role in the central nervous system by regulating interstitial concentrations of neurotransmitters. Also capable of transporting dopaminergic neuromodulators cyclo(his-pro), salsolinol and N-methyl-salsolinol, thereby involved in the maintenance of dopaminergic cell integrity in the central nervous system. Mediates the bidirectional transport of acetylcholine (ACh) at the apical membrane of ciliated cell in airway epithelium, thereby playing a role in luminal release of ACh from bronchial epithelium. Also transports guanidine and endogenous monoamines such as vitamin B1/thiamine, creatinine and N-1-methylnicotinamide (NMN). Mediates the uptake and efflux of quaternary ammonium compound choline. Mediates the bidirectional transport of polyamine agmatine and the uptake of polyamines putrescine and spermidine. Able to transport non-amine endogenous compounds such as prostaglandin E2 (PGE2) and prostaglandin F2-alpha (PGF2-alpha). Also involved in the uptake of xenobiotic 4-(4-(dimethylamino)styryl)-N-methylpyridinium (ASP). May contribute to regulate the transport of organic compounds in testis across the blood-testis-barrier. This chain is Solute carrier family 22 member 2, found in Mus musculus (Mouse).